Consider the following 165-residue polypeptide: E3 ubiquitin ligase complex SCF subunit sconC (165 aa).

Positions 106 to 165 (ILAANYLDIKALLDVGCKTVANMIKGKSPEEIRKTFNIQNDFTPEEEDQIRRENEWAEDR) are interaction with the F-box domain of F-box proteins.

This sequence belongs to the SKP1 family. In terms of assembly, component of the SCF (SKP1-CUL1-F-box protein) E3 ubiquitin ligase complexes.

The protein operates within protein modification; protein ubiquitination. Its function is as follows. Essential component of the SCF (SKP1-CUL1-F-box protein) E3 ubiquitin ligase complexes, which mediate the ubiquitination and subsequent proteasomal degradation of target proteins. Controls sulfur metabolite repression, probably by mediating the inactivation or degradation of the metR transcription factor. This chain is E3 ubiquitin ligase complex SCF subunit sconC (sconC), found in Arthroderma otae (Microsporum canis).